The following is a 301-amino-acid chain: Thiosulfate sulfurtransferase (301 aa).

2 Rhodanese domains span residues 31-138 and 171-289; these read GSPG…DTSY and QSGG…MPIE. Residue cysteine 248 is the Cysteine persulfide intermediate of the active site. Arginine 253 contributes to the substrate binding site.

It catalyses the reaction thiosulfate + hydrogen cyanide = thiocyanate + sulfite + 2 H(+). The polypeptide is Thiosulfate sulfurtransferase (thtR) (Corynebacterium glutamicum (strain ATCC 13032 / DSM 20300 / JCM 1318 / BCRC 11384 / CCUG 27702 / LMG 3730 / NBRC 12168 / NCIMB 10025 / NRRL B-2784 / 534)).